The following is a 595-amino-acid chain: Actin-histidine N-methyltransferase (595 aa).

A disordered region spans residues 1–22 (MGKKSRVKTQKSGTGATATVSP). A compositionally biased stretch (polar residues) spans 10 to 20 (QKSGTGATATV). S-adenosyl-L-methionine contacts are provided by residues arginine 75, 104–106 (EGF), arginine 254, 275–279 (DMCNH), and 325–327 (SGF). Residues 94–314 (EGFEMVNFKE…AGEQIYIFYG (221 aa)) form the SET domain. Serine 513 is subject to Phosphoserine. Over residues 549–572 (ENGLVNGENSVPNGTRSENENLNQ) the composition is skewed to polar residues. Residues 549 to 595 (ENGLVNGENSVPNGTRSENENLNQEESKRAVEDAKGSSSDNTAEVKE) form a disordered region. Over residues 573-583 (EESKRAVEDAK) the composition is skewed to basic and acidic residues. Over residues 584–595 (GSSSDNTAEVKE) the composition is skewed to polar residues.

It belongs to the class V-like SAM-binding methyltransferase superfamily. SETD3 actin-histidine methyltransferase family. Interacts with MYOD1. Post-translationally, phosphorylated by GSK3B, which is required for recognition by the SCF(FBXW7) complex and subsequent degradation. Ubiquitinated by the SCF(FBXW7) complex following phosphorylation by GSK3B, leading to its degradation by the proteasome.

The protein localises to the cytoplasm. It is found in the nucleus. It carries out the reaction L-histidyl-[protein] + S-adenosyl-L-methionine = N(tele)-methyl-L-histidyl-[protein] + S-adenosyl-L-homocysteine + H(+). In terms of biological role, protein-histidine N-methyltransferase that specifically mediates 3-methylhistidine (tele-methylhistidine) methylation of actin at 'His-73'. Histidine methylation of actin is required for smooth muscle contraction of the laboring uterus during delivery. Does not have protein-lysine N-methyltransferase activity and probably only catalyzes histidine methylation of actin. The sequence is that of Actin-histidine N-methyltransferase from Papio anubis (Olive baboon).